Here is a 344-residue protein sequence, read N- to C-terminus: Putative transport protein sll0060 (344 aa).

8 consecutive transmembrane segments (helical) span residues 14 to 34, 41 to 61, 72 to 92, 155 to 175, 215 to 235, 237 to 257, 262 to 282, and 310 to 330; these read LWIGLTLPLCLLNGWVLLQIL, LRIFIIANLVAFILGYPVRWL, AVALVLLTTAIILAVIGLLVI, LINLLIWTAGSLVEAGFIFIM, IGQATVAALLGVSLIISLSIF, VPLALLFGMFVGFMAFFPFGG, VLISIIASFQSIWLGIKVLAI, and ILLSLMIGAKVAGLLGILVAI.

The protein belongs to the autoinducer-2 exporter (AI-2E) (TC 2.A.86) family.

The protein localises to the cell membrane. In Synechocystis sp. (strain ATCC 27184 / PCC 6803 / Kazusa), this protein is Putative transport protein sll0060.